Here is a 395-residue protein sequence, read N- to C-terminus: GDP-mannose 4,6 dehydratase (395 aa).

Polar residues-rich tracts occupy residues 1–13 (MLNT…STSD) and 24–36 (ESSS…QNGT). Residues 1–44 (MLNTRLIAMSTSDGAPETKKQRPESSSNGSKDQNGTEAGAEGDS) form a disordered region. Residues 53-58 (GITGQD), 109-110 (DM), 131-135 (LAAQS), and Tyr146 each bind NADP(+). The active site involves Thr178. Residues Glu180 and Tyr202 each act as nucleophile in the active site. Lys206, His232, and Arg237 together coordinate NADP(+).

Belongs to the NAD(P)-dependent epimerase/dehydratase family. GDP-mannose 4,6-dehydratase subfamily. It depends on NADP(+) as a cofactor.

The catalysed reaction is GDP-alpha-D-mannose = GDP-4-dehydro-alpha-D-rhamnose + H2O. It functions in the pathway nucleotide-sugar biosynthesis; GDP-L-fucose biosynthesis via de novo pathway; GDP-L-fucose from GDP-alpha-D-mannose: step 1/2. In terms of biological role, catalyzes the conversion of GDP-D-mannose to GDP-4-dehydro-6-deoxy-D-mannose (also known as GDP-4-keto-6-deoxy-D-mannose or GDP-4-dehydro-alpha-D-rhamnose), an essential step in the synthesis of GDP-fucose from GDP-mannose. The protein is GDP-mannose 4,6 dehydratase (Gmd) of Drosophila melanogaster (Fruit fly).